A 181-amino-acid chain; its full sequence is MAADANNLIWIDLEMTGLEPDVDRVIEIATLVTDQELNIIGQGPVIAIHQSDDVLAAMDDWNQKHHGESGLIDRVRASQMNEAQAVAQTIAFLEQYVPKGASPMCGNSVGQDRRFLNRYMRELEDYFHYRNLDVSTVKELVKRWSPETMAGFKKQNTHQALQDIQESIAELQYYRSKVFKI.

One can recognise an Exonuclease domain in the interval 8–171; it reads LIWIDLEMTG…QDIQESIAEL (164 aa). Residue Tyr-129 is part of the active site.

This sequence belongs to the oligoribonuclease family.

The protein resides in the cytoplasm. In terms of biological role, 3'-to-5' exoribonuclease specific for small oligoribonucleotides. This is Oligoribonuclease from Shewanella sp. (strain ANA-3).